Here is a 780-residue protein sequence, read N- to C-terminus: Cullin-5 (780 aa).

Serine 34 bears the Phosphoserine mark. Phosphothreonine is present on threonine 210. Residues 711–772 form the Cullin neddylation domain; sequence RILRTQEAII…HKYIRRDEAD (62 aa). A Glycyl lysine isopeptide (Lys-Gly) (interchain with G-Cter in NEDD8) cross-link involves residue lysine 724.

The protein belongs to the cullin family. Component of multiple cullin-5-RING E3 ubiquitin-protein ligase complexes (ECS complexes, also named CRL5 complexes) formed of CUL5, Elongin BC (ELOB and ELOC), RNF7/RBX2 and a variable SOCS box domain-containing protein as substrate-specific recognition component. CUL5-containing ECS complexes specifically contain RNF7/RBX2, and not RBX1, as catalytic subunit. Component of the ECS(ASB2) complex with the substrate recognition component ASB2. Component of the ECS(ASB6) complex with the substrate recognition component ASB6. Component of the ECS(ASB7) complex with the substrate recognition component ASB7. Component of the ECS(ASB9) complex with the substrate recognition component ASB9. Component of the ECS(ASB11) complex with the substrate recognition component ASB11. Component of the ECS(ASB12) complex with the substrate recognition component ASB12. Component of the ECS(LRRC41) complex with the substrate recognition component LRRC41. Component of the ECS(SOCS1) complex with the substrate recognition component SOCS1. Component of the ECS(SOCS2) complex with the substrate recognition component SOCS2. Component of the ECS(WSB1) complex with the substrate recognition subunit WSB1. Component of the ECS(SOCS3) complex with the substrate recognition component SOCS3. Component of the ECS(SOCS7) complex with the substrate recognition component SOCS7. Component of the ECS(SPSB1) complex with the substrate recognition component SPSB1. Component of the ECS(SPSB3) complex with the substrate recognition component SPSB3. Component of the ECS(SPSB2) complex with the substrate recognition component SPSB2. Component of the ECS(SPSB4) complex with the substrate recognition component SPSB4. Component of the ECS(RAB40) complex with the substrate recognition subunit RAB40A, RAB40B or RAB40C. Component of the ECS(KLHDC1) complex with the substrate recognition component KLHDC1. Component of the ECS(PCMTD1) complex with the substrate recognition subunit PCMTD1. May also form complexes containing RBX1 and ELOA or VHL; additional evidence is however required to confirm this result in vivo. Interacts (when neddylated) with ARIH2; leading to activate the E3 ligase activity of ARIH2. Interacts with ERCC6; the interaction is induced by DNA damaging agents or inhibitors of RNA polymerase II elongation. Interacts with ELOA (via the BC-box). Interacts (unneddylated form) with DCUN1D1, DCUN1D2, DCUN1D3, DCUN1D4 and DCUN1D5; these interactions promote the cullin neddylation. Post-translationally, neddylated; which enhances the ubiquitination activity of ECS complexes and prevents binding of the inhibitor CAND1. Deneddylated via its interaction with the COP9 signalosome (CSN).

The protein resides in the nucleus. It participates in protein modification; protein ubiquitination. In terms of biological role, core component of multiple cullin-5-RING E3 ubiquitin-protein ligase complexes (ECS complexes, also named CRL5 complexes), which mediate the ubiquitination and subsequent proteasomal degradation of target proteins. Acts a scaffold protein that contributes to catalysis through positioning of the substrate and the ubiquitin-conjugating enzyme. The functional specificity of the E3 ubiquitin-protein ligase complex depends on the variable SOCS box-containing substrate recognition component. Acts as a key regulator of neuron positioning during cortex development: component of various SOCS-containing ECS complexes, such as the ECS(SOCS7) complex, that regulate reelin signaling by mediating ubiquitination and degradation of DAB1. ECS(SOCS1) seems to direct ubiquitination of JAK2. The ECS(SOCS2) complex mediates the ubiquitination and subsequent proteasomal degradation of phosphorylated EPOR and GHR. The ECS(SPSB3) complex catalyzes ubiquitination of nuclear CGAS. ECS(KLHDC1) complex is part of the DesCEND (destruction via C-end degrons) pathway and mediates ubiquitination and degradation of truncated SELENOS selenoprotein produced by failed UGA/Sec decoding, which ends with a glycine. The ECS(ASB9) complex mediates ubiquitination and degradation of CKB. As part of some ECS complex, promotes 'Lys-11'-linked ubiquitination and degradation of BTRC. As part of a multisubunit ECS complex, polyubiquitinates monoubiquitinated POLR2A. As part of the ECS(RAB40C) complex, mediates ANKRD28 ubiquitination and degradation, thereby regulating protein phosphatase 6 (PP6) complex activity and focal adhesion assembly during cell migration. As part of the ECS(RAB40A) complex, mediates RHOU 'Lys-48'-linked ubiquitination and degradation, thus inhibiting focal adhesion disassembly during cell migration. As part of the ECS(RAB40B) complex, mediates LIMA1/EPLIN and RAP2 ubiquitination, thereby regulating actin cytoskeleton dynamics and stress fiber formation during cell migration. May form a cell surface vasopressin receptor. The protein is Cullin-5 of Rattus norvegicus (Rat).